The following is a 200-amino-acid chain: Transcriptional repressor NrdR (200 aa).

The segment at 3 to 34 is a zinc-finger region; the sequence is CPFCQNPDTKVIDTRISDDGHSIRRRRECPNC. In terms of domain architecture, ATP-cone spans 46–136; the sequence is LLVKKRSGNV…VYQNFEDLED (91 aa).

This sequence belongs to the NrdR family. The cofactor is Zn(2+).

Functionally, negatively regulates transcription of bacterial ribonucleotide reductase nrd genes and operons by binding to NrdR-boxes. In Bifidobacterium animalis subsp. lactis (strain AD011), this protein is Transcriptional repressor NrdR.